The sequence spans 207 residues: 3-isopropylmalate dehydratase small subunit (207 aa).

It belongs to the LeuD family. LeuD type 1 subfamily. As to quaternary structure, heterodimer of LeuC and LeuD.

The enzyme catalyses (2R,3S)-3-isopropylmalate = (2S)-2-isopropylmalate. Its pathway is amino-acid biosynthesis; L-leucine biosynthesis; L-leucine from 3-methyl-2-oxobutanoate: step 2/4. Functionally, catalyzes the isomerization between 2-isopropylmalate and 3-isopropylmalate, via the formation of 2-isopropylmaleate. This Gluconacetobacter diazotrophicus (strain ATCC 49037 / DSM 5601 / CCUG 37298 / CIP 103539 / LMG 7603 / PAl5) protein is 3-isopropylmalate dehydratase small subunit.